A 644-amino-acid polypeptide reads, in one-letter code: Kininogen-1 (644 aa).

A signal peptide spans 1-18; that stretch reads MKLITILFLCSRLLLSLT. Gln-19 bears the Pyrrolidone carboxylic acid; in mature form mark. The Cystatin kininogen-type 1 domain maps to 28–132; sequence CNDKDLFKAV…TQTCQITPAE (105 aa). 9 cysteine pairs are disulfide-bonded: Cys-28/Cys-614, Cys-83/Cys-94, Cys-107/Cys-126, Cys-142/Cys-145, Cys-206/Cys-218, Cys-229/Cys-248, Cys-264/Cys-267, Cys-328/Cys-340, and Cys-351/Cys-370. N-linked (GlcNAc...) (complex) asparagine glycosylation is present at Asn-48. Positions 120-153 are O-glycosylated at one site only; sequence SVATQTCQITPAEGPVVTAQYDCLGCVHPISTQS. A Cystatin kininogen-type 2 domain is found at 151 to 254; that stretch reads TQSPDLEPIL…SQNCDIYPGK (104 aa). Asn-169 carries an N-linked (GlcNAc...) asparagine glycan. The N-linked (GlcNAc...) (complex) asparagine glycan is linked to Asn-205. Residues 273–376 enclose the Cystatin kininogen-type 3 domain; sequence TNSPELEETL…TVNCQPLGMI (104 aa). Residue Asn-294 is glycosylated (N-linked (GlcNAc...) (complex) asparagine). Ser-332 bears the Phosphoserine; by FAM20C mark. Pro-383 bears the 4-hydroxyproline; partial mark. Positions 387–555 are disordered; sequence PFRSSRIGEI…TPIPSLAKPG (169 aa). The O-linked (GalNAc...) threonine glycan is linked to Thr-401. Positions 418–434 are enriched in basic and acidic residues; that stretch reads DSGKEQGHTRRHDWGHE. Repeats lie at residues 420–449, 450–479, and 480–510; these read GKEQGHTRRHDWGHEKQRKHNLGHGHKHER, DQGHGHQRGHGLGHGHEQQHGLGHGHKFKL, and DDDLEHQGGHVLDHGHKHKHGHGHGKHKNKG. A compositionally biased stretch (basic residues) spans 435–446; it reads KQRKHNLGHGHK. Over residues 477 to 493 the composition is skewed to basic and acidic residues; that stretch reads FKLDDDLEHQGGHVLDH. Residues 494–518 are compositionally biased toward basic residues; the sequence is GHKHKHGHGHGKHKNKGKKNGKHNG. The span at 524 to 539 shows a compositional bias: polar residues; the sequence is LASSSEDSTTPSAQTQ. O-linked (GalNAc...) threonine glycosylation is found at Thr-533, Thr-542, Thr-546, Thr-557, and Thr-571. Ser-577 carries an O-linked (GalNAc...) serine glycan. O-linked (GalNAc...) threonine glycosylation occurs at Thr-628.

In terms of assembly, interacts (high molecular weight kininogen) (via amino acids 402-532) with triafestin-1 and triafestin-2, anticoagulant proteins from Triatoma infestans. Interacts (high molecular weight kininogen) (via amino acids 402-532) with short form salivary protein D7R1, an anticoagulant protein from Anopheles stephensi. Interacts (high molecular weight kininogen) (via amino acids 421-466 and 459-513) with haemaphysalin, an anticoagulant protein from Haemaphysalis longicornis. Post-translationally, bradykinin is inactivated by ACE, which removes the dipeptide Arg-Phe from its C-terminus. In terms of processing, bradykinin is released from kininogen by plasma kallikrein. Hydroxylation of Pro-383 occurs prior to the release of bradykinin. Post-translationally, phosphorylated by FAM20C in the extracellular medium. In terms of processing, N- and O-glycosylated. O-glycosylated with core 1 or possibly core 8 glycans. (Microbial infection) Bradykinin is generated upon proteolytic cleavage by S.pyogenes SpeB to produce hypotension during septic shock. In terms of tissue distribution, secreted in plasma. T-kinin is detected in malignant ovarian, colon and breast carcinomas, but not in benign tumors.

The protein localises to the secreted. It is found in the extracellular space. Its function is as follows. Kininogens are inhibitors of thiol proteases. HMW-kininogen plays an important role in blood coagulation by helping to position optimally prekallikrein and factor XI next to factor XII; HMW-kininogen inhibits the thrombin- and plasmin-induced aggregation of thrombocytes. LMW-kininogen inhibits the aggregation of thrombocytes. LMW-kininogen is in contrast to HMW-kininogen not involved in blood clotting. In terms of biological role, the active peptide bradykinin is a potent vasodilatator that is released from HMW-kininogen shows a variety of physiological effects: (A) influence in smooth muscle contraction, (B) induction of hypotension, (C) natriuresis and diuresis, (D) decrease in blood glucose level, (E) it is a mediator of inflammation and causes (E1) increase in vascular permeability, (E2) stimulation of nociceptors (4E3) release of other mediators of inflammation (e.g. prostaglandins), (F) it has a cardioprotective effect (directly via bradykinin action, indirectly via endothelium-derived relaxing factor action). The polypeptide is Kininogen-1 (KNG1) (Homo sapiens (Human)).